We begin with the raw amino-acid sequence, 886 residues long: MESAEIARRWLAFFEKRDHVVVPSTPLVADDPELLFVVAGMQPFKPYFRGDAPAPWPRATSVQKVLRTPDIDEVGKTTRHATFFHMCGNFSFGDYFKETAIPLAWELLTTPVADGGYGFAPDRLWVTVYTDDDEAADIWHRVVGLPVDRIQRRGMADNFWSMGVPGPCGPCSEIYYDRGPEFGVGGGPVANEERYLEVWNLVFMQYERGPGGAKDNYPILGELPAKNIDTGMGLERMAAILQGVDNIYEIDTTRPILDKAAELTGQRYGSGGQNDVRLRMVADHIRAITMLVNDGVVPSNEERGYVLRRLMRRVVRAMRLLGAREPTMHELVATAIAVFTPQYPELSRNAERIFAVADGEEASFFSTLAAGTARFEAAVREAGGGVLSGEQAFVLHDTYGFPIDLTLEMAAEQGVTVDEEGFRALMAEQRRRAKEDAERRKTGAADRAAYRAAAELLGRPVEFTGYTERSGEAVVRGLLVDGAAVPAAHAGQRVEVVLDRTPFYAEGGGQLPDHGVLEFAAGRIDVDDVQQPLPGLIVHRGRVADGEITVGETVLARIDVDRRWAISRSHTATHMVHKAFREFLGDTAAQAGSENAPGRFRFDFTNPSAVPPSVLGEVEERVNDLLLHDLEVTAQIMRQQEAIASGAIAMFGEKYGDQVRVISIGDWSRELCGGTHVPHTGHLGVIKIVSESSIGAGVRRIEALVGLDAYRYLAREAVLVSQLAEQLKAPADELPDRIAGMLARLRDAEKELEKLRQARLLAEAPRLAAARVDVGGLAVVAARVDGDGVDADGLRLLATDLRQRLGGSAVVVLAGVAGGRPVVVAAVGSEALARGVKAGELVGVAAKRLGGGGGGRPDFAQGGGTNPAAVDDAVSAALDAVRAQVG.

4 residues coordinate Zn(2+): His570, His574, Cys672, and His676.

The protein belongs to the class-II aminoacyl-tRNA synthetase family. Zn(2+) is required as a cofactor.

It is found in the cytoplasm. The catalysed reaction is tRNA(Ala) + L-alanine + ATP = L-alanyl-tRNA(Ala) + AMP + diphosphate. Its function is as follows. Catalyzes the attachment of alanine to tRNA(Ala) in a two-step reaction: alanine is first activated by ATP to form Ala-AMP and then transferred to the acceptor end of tRNA(Ala). Also edits incorrectly charged Ser-tRNA(Ala) and Gly-tRNA(Ala) via its editing domain. The chain is Alanine--tRNA ligase from Acidothermus cellulolyticus (strain ATCC 43068 / DSM 8971 / 11B).